The chain runs to 623 residues: Phosphoenolpyruvate carboxykinase [GTP] (623 aa).

Substrate contacts are provided by residues arginine 86 and 220–222 (YGG). Positions 229 and 248 each coordinate Mn(2+). Position 270 (serine 270) interacts with substrate. Position 271 to 276 (271 to 276 (MCGKTS)) interacts with GTP. The active site involves cysteine 272. Position 289 (aspartate 289) interacts with Mn(2+). 384–386 (NAR) contacts substrate. GTP-binding residues include arginine 386 and arginine 418.

Belongs to the phosphoenolpyruvate carboxykinase [GTP] family. In terms of assembly, homotetramer. Mn(2+) serves as cofactor.

It localises to the cytoplasm. It catalyses the reaction oxaloacetate + GTP = phosphoenolpyruvate + GDP + CO2. The protein operates within carbohydrate biosynthesis; gluconeogenesis. In terms of biological role, involved in the gluconeogenesis. Catalyzes the conversion of oxaloacetate (OAA) to phosphoenolpyruvate (PEP), the rate-limiting step in the metabolic pathway that produces glucose from lactate and other precursors derived from the citric acid cycle. The protein is Phosphoenolpyruvate carboxykinase [GTP] (pckG) of Thermococcus kodakarensis (strain ATCC BAA-918 / JCM 12380 / KOD1) (Pyrococcus kodakaraensis (strain KOD1)).